We begin with the raw amino-acid sequence, 282 residues long: Acetylglutamate kinase (282 aa).

Substrate-binding positions include 62 to 63 (GG), arginine 84, and asparagine 178.

The protein belongs to the acetylglutamate kinase family. ArgB subfamily.

It localises to the cytoplasm. It carries out the reaction N-acetyl-L-glutamate + ATP = N-acetyl-L-glutamyl 5-phosphate + ADP. The protein operates within amino-acid biosynthesis; L-arginine biosynthesis; N(2)-acetyl-L-ornithine from L-glutamate: step 2/4. Its function is as follows. Catalyzes the ATP-dependent phosphorylation of N-acetyl-L-glutamate. This chain is Acetylglutamate kinase, found in Kosmotoga olearia (strain ATCC BAA-1733 / DSM 21960 / TBF 19.5.1).